Consider the following 43-residue polypeptide: Cytochrome b559 subunit beta (43 aa).

The helical transmembrane segment at 18–34 (WLSVHALGIPTIFFLGA) threads the bilayer. His22 is a binding site for heme.

Belongs to the PsbE/PsbF family. As to quaternary structure, heterodimer of an alpha subunit and a beta subunit. PSII is composed of 1 copy each of membrane proteins PsbA, PsbB, PsbC, PsbD, PsbE, PsbF, PsbH, PsbI, PsbJ, PsbK, PsbL, PsbM, PsbT, PsbX, PsbY, PsbZ, Psb30/Ycf12, at least 3 peripheral proteins of the oxygen-evolving complex and a large number of cofactors. It forms dimeric complexes. The cofactor is heme b.

It is found in the plastid. Its subcellular location is the chloroplast thylakoid membrane. In terms of biological role, this b-type cytochrome is tightly associated with the reaction center of photosystem II (PSII). PSII is a light-driven water:plastoquinone oxidoreductase that uses light energy to abstract electrons from H(2)O, generating O(2) and a proton gradient subsequently used for ATP formation. It consists of a core antenna complex that captures photons, and an electron transfer chain that converts photonic excitation into a charge separation. The protein is Cytochrome b559 subunit beta of Stigeoclonium helveticum (Green alga).